A 203-amino-acid polypeptide reads, in one-letter code: FMN-dependent NADH:quinone oxidoreductase (203 aa).

Residues S9, 15-17 (SVS), and 138-141 (SRGG) each bind FMN.

Belongs to the azoreductase type 1 family. In terms of assembly, homodimer. FMN serves as cofactor.

It carries out the reaction 2 a quinone + NADH + H(+) = 2 a 1,4-benzosemiquinone + NAD(+). The catalysed reaction is N,N-dimethyl-1,4-phenylenediamine + anthranilate + 2 NAD(+) = 2-(4-dimethylaminophenyl)diazenylbenzoate + 2 NADH + 2 H(+). In terms of biological role, quinone reductase that provides resistance to thiol-specific stress caused by electrophilic quinones. Its function is as follows. Also exhibits azoreductase activity. Catalyzes the reductive cleavage of the azo bond in aromatic azo compounds to the corresponding amines. The protein is FMN-dependent NADH:quinone oxidoreductase of Methylorubrum extorquens (strain PA1) (Methylobacterium extorquens).